A 193-amino-acid polypeptide reads, in one-letter code: Probable nicotinate-nucleotide adenylyltransferase (193 aa).

It belongs to the NadD family.

It carries out the reaction nicotinate beta-D-ribonucleotide + ATP + H(+) = deamido-NAD(+) + diphosphate. The protein operates within cofactor biosynthesis; NAD(+) biosynthesis; deamido-NAD(+) from nicotinate D-ribonucleotide: step 1/1. Functionally, catalyzes the reversible adenylation of nicotinate mononucleotide (NaMN) to nicotinic acid adenine dinucleotide (NaAD). This Flavobacterium johnsoniae (strain ATCC 17061 / DSM 2064 / JCM 8514 / BCRC 14874 / CCUG 350202 / NBRC 14942 / NCIMB 11054 / UW101) (Cytophaga johnsonae) protein is Probable nicotinate-nucleotide adenylyltransferase.